The following is a 310-amino-acid chain: Fe-S cluster assembly protein dre2 (310 aa).

The interval 1–130 (MSGRTLLLSP…KPDIEDMRAV (130 aa)) is N-terminal SAM-like domain. The segment at 131-203 (PLRLGRKKHD…EDLLDGSELA (73 aa)) is linker. [2Fe-2S] cluster is bound by residues Cys-212, Cys-223, Cys-226, and Cys-228. A fe-S binding site A region spans residues 212 to 228 (CRPKAGRRRRACKDCTC). [4Fe-4S] cluster contacts are provided by Cys-273, Cys-276, Cys-284, and Cys-287. 2 short sequence motifs (cx2C motif) span residues 273–276 (CGNC) and 284–287 (CEGC). Residues 273-287 (CGNCSLGDAFRCEGC) are fe-S binding site B.

It belongs to the anamorsin family. In terms of assembly, monomer. Interacts with tah18. Interacts with mia40. Requires [2Fe-2S] cluster as cofactor. It depends on [4Fe-4S] cluster as a cofactor.

The protein resides in the cytoplasm. The protein localises to the mitochondrion intermembrane space. Component of the cytosolic iron-sulfur (Fe-S) protein assembly (CIA) machinery required for the maturation of extramitochondrial Fe-S proteins. Part of an electron transfer chain functioning in an early step of cytosolic Fe-S biogenesis, facilitating the de novo assembly of a [4Fe-4S] cluster on the scaffold complex cfd1-nbp35. Electrons are transferred to dre2 from NADPH via the FAD- and FMN-containing protein tah18. Tah18-dre2 are also required for the assembly of the diferric tyrosyl radical cofactor of ribonucleotide reductase (RNR), probably by providing electrons for reduction during radical cofactor maturation in the catalytic small subunit rnr2. The chain is Fe-S cluster assembly protein dre2 from Aspergillus clavatus (strain ATCC 1007 / CBS 513.65 / DSM 816 / NCTC 3887 / NRRL 1 / QM 1276 / 107).